Here is an 84-residue protein sequence, read N- to C-terminus: U4-theraphotoxin-Hhn1a (84 aa).

The first 22 residues, 1 to 22 (MKVTLIAIPTCAAVLVLHTTAA), serve as a signal peptide directing secretion. The propeptide occupies 23 to 47 (EELEESQLMEVGMPDTELAAVDEER). 3 disulfide bridges follow: Cys-51-Cys-65, Cys-55-Cys-76, and Cys-70-Cys-81.

It belongs to the neurotoxin 12 (Hwtx-2) family. 02 (Hwtx-2) subfamily. In terms of tissue distribution, expressed by the venom gland.

The protein localises to the secreted. Functionally, postsynaptic neurotoxin. This Cyriopagopus hainanus (Chinese bird spider) protein is U4-theraphotoxin-Hhn1a.